The following is a 1173-amino-acid chain: PR domain zinc finger protein 10 (1173 aa).

A disordered region spans residues 146–211; that stretch reads RLPPMEGADS…AEPPRPFDPN (66 aa). Polar residues predominate over residues 154 to 167; sequence DSSTTINSLPSPNA. Acidic residues predominate over residues 172-202; sequence KEDDDDDDDDDDDEEEEDDDGEDSDLDDWEA. The SET domain maps to 248–366; the sequence is LPLVLYIDRF…PKQELKVWYA (119 aa). Residues 267 to 371 form an N-terminal PR domain; essential for transcriptional activator activity region; it reads IPKRTQFGPL…KVWYAASYAE (105 aa). A C2H2-type 1 zinc finger spans residues 395 to 417; the sequence is WPCYECNRRFMSSEQLQQHLNSH. A compositionally biased stretch (basic residues) spans 430 to 447; the sequence is RGRTRTRRKFGPGRRPGR. Residues 430-451 are disordered; the sequence is RGRTRTRRKFGPGRRPGRPPKF. 9 C2H2-type zinc fingers span residues 559–581, 589–611, 617–639, 645–668, 673–695, 701–724, 756–779, 801–824, and 863–886; these read FKCL…LRFH, LTCD…MKFH, YSCI…VVVH, FSCP…RSFH, YQCT…MLRH, FLCS…QRMH, FKCR…SKRH, YYCQ…LKNH, and VCCP…RKKH. Residues 926–1153 are C-terminal glutamine-rich region; essential for transcriptional activator activity; it reads QAMTELSQTL…PASNSSQTTQ (228 aa). Disordered regions lie at residues 1014–1056 and 1125–1173; these read PTSG…ANSA and KKSS…ISKP. Residues 1150-1160 are compositionally biased toward low complexity; the sequence is QTTQYIITTTT. Positions 1161–1173 are enriched in polar residues; it reads NMNGSSEVHISKP.

Belongs to the class V-like SAM-binding methyltransferase superfamily.

The protein localises to the nucleus. In terms of biological role, transcriptional activator, essential for early embryonic development and survival of embryonic stem cells (ESCs). Supports cell growth and survival during early development by transcriptionally activating the expression of the translation initiation factor EIF3B, to sustain global translation. Activates the transcription of FLNC. This Xenopus tropicalis (Western clawed frog) protein is PR domain zinc finger protein 10 (prdm10).